Reading from the N-terminus, the 587-residue chain is Formate--tetrahydrofolate ligase (587 aa).

Residue 73 to 80 (TPLGEGKS) coordinates ATP.

Belongs to the formate--tetrahydrofolate ligase family.

The enzyme catalyses (6S)-5,6,7,8-tetrahydrofolate + formate + ATP = (6R)-10-formyltetrahydrofolate + ADP + phosphate. It participates in one-carbon metabolism; tetrahydrofolate interconversion. The sequence is that of Formate--tetrahydrofolate ligase from Desulfosudis oleivorans (strain DSM 6200 / JCM 39069 / Hxd3) (Desulfococcus oleovorans).